The sequence spans 1388 residues: DNA-directed RNA polymerase subunit beta' (1388 aa).

Cysteine 76, cysteine 78, cysteine 91, and cysteine 94 together coordinate Zn(2+). Mg(2+) contacts are provided by aspartate 467, aspartate 469, and aspartate 471. Positions 810, 884, 891, and 894 each coordinate Zn(2+).

This sequence belongs to the RNA polymerase beta' chain family. As to quaternary structure, the RNAP catalytic core consists of 2 alpha, 1 beta, 1 beta' and 1 omega subunit. When a sigma factor is associated with the core the holoenzyme is formed, which can initiate transcription. Requires Mg(2+) as cofactor. Zn(2+) serves as cofactor.

It catalyses the reaction RNA(n) + a ribonucleoside 5'-triphosphate = RNA(n+1) + diphosphate. DNA-dependent RNA polymerase catalyzes the transcription of DNA into RNA using the four ribonucleoside triphosphates as substrates. The protein is DNA-directed RNA polymerase subunit beta' of Lawsonia intracellularis (strain PHE/MN1-00).